The following is an 82-amino-acid chain: Small ribosomal subunit protein bS16 (82 aa).

Belongs to the bacterial ribosomal protein bS16 family.

In Marinomonas sp. (strain MWYL1), this protein is Small ribosomal subunit protein bS16.